We begin with the raw amino-acid sequence, 484 residues long: Adenylosuccinate lyase (484 aa).

Ala-2 bears the N-acetylalanine mark. Residues 20–21, 85–87, and 111–112 contribute to the substrate site; these read RY, RHD, and TS. N6-acetyllysine is present on Lys-147. His-159 serves as the catalytic Proton donor/acceptor. Residue Gln-241 coordinates substrate. Ser-289 (proton donor/acceptor) is an active-site residue. Lys-295 is subject to N6-acetyllysine. Positions 303, 329, 334, and 338 each coordinate substrate. Lys-415 participates in a covalent cross-link: Glycyl lysine isopeptide (Lys-Gly) (interchain with G-Cter in SUMO1).

Belongs to the lyase 1 family. Adenylosuccinate lyase subfamily. Homotetramer. Residues from neighboring subunits contribute catalytic and substrate-binding residues to each active site. Ubiquitously expressed. Both isoforms are produced by all tissues. Isoform 2 is 10-fold less abundant than isoform 1.

It carries out the reaction N(6)-(1,2-dicarboxyethyl)-AMP = fumarate + AMP. The catalysed reaction is (2S)-2-[5-amino-1-(5-phospho-beta-D-ribosyl)imidazole-4-carboxamido]succinate = 5-amino-1-(5-phospho-beta-D-ribosyl)imidazole-4-carboxamide + fumarate. It functions in the pathway purine metabolism; AMP biosynthesis via de novo pathway; AMP from IMP: step 2/2. Its pathway is purine metabolism; IMP biosynthesis via de novo pathway; 5-amino-1-(5-phospho-D-ribosyl)imidazole-4-carboxamide from 5-amino-1-(5-phospho-D-ribosyl)imidazole-4-carboxylate: step 2/2. With respect to regulation, the enzyme reaction kinetics indicate cooperativity between subunits. Its function is as follows. Catalyzes two non-sequential steps in de novo AMP synthesis: converts (S)-2-(5-amino-1-(5-phospho-D-ribosyl)imidazole-4-carboxamido)succinate (SAICAR) to fumarate plus 5-amino-1-(5-phospho-D-ribosyl)imidazole-4-carboxamide, and thereby also contributes to de novo IMP synthesis, and converts succinyladenosine monophosphate (SAMP) to AMP and fumarate. The polypeptide is Adenylosuccinate lyase (ADSL) (Homo sapiens (Human)).